We begin with the raw amino-acid sequence, 507 residues long: ATP synthase subunit alpha, plastid (507 aa).

170-177 serves as a coordination point for ATP; it reads GDRQTGKT.

The protein belongs to the ATPase alpha/beta chains family. As to quaternary structure, F-type ATPases have 2 components, CF(1) - the catalytic core - and CF(0) - the membrane proton channel. CF(1) has five subunits: alpha(3), beta(3), gamma(1), delta(1), epsilon(1). CF(0) has four main subunits: a, b, b' and c.

Its subcellular location is the plastid membrane. The enzyme catalyses ATP + H2O + 4 H(+)(in) = ADP + phosphate + 5 H(+)(out). Its function is as follows. Produces ATP from ADP in the presence of a proton gradient across the membrane. The alpha chain is a regulatory subunit. The polypeptide is ATP synthase subunit alpha, plastid (Cuscuta gronovii (Common dodder)).